A 469-amino-acid chain; its full sequence is ATP synthase subunit beta (469 aa).

155 to 162 (GGAGVGKT) lines the ATP pocket.

This sequence belongs to the ATPase alpha/beta chains family. In terms of assembly, F-type ATPases have 2 components, CF(1) - the catalytic core - and CF(0) - the membrane proton channel. CF(1) has five subunits: alpha(3), beta(3), gamma(1), delta(1), epsilon(1). CF(0) has three main subunits: a(1), b(2) and c(9-12). The alpha and beta chains form an alternating ring which encloses part of the gamma chain. CF(1) is attached to CF(0) by a central stalk formed by the gamma and epsilon chains, while a peripheral stalk is formed by the delta and b chains.

The protein resides in the cell inner membrane. It catalyses the reaction ATP + H2O + 4 H(+)(in) = ADP + phosphate + 5 H(+)(out). In terms of biological role, produces ATP from ADP in the presence of a proton gradient across the membrane. The catalytic sites are hosted primarily by the beta subunits. This is ATP synthase subunit beta from Helicobacter pylori (strain ATCC 700392 / 26695) (Campylobacter pylori).